A 352-amino-acid chain; its full sequence is Maleylacetate reductase (352 aa).

It belongs to the iron-containing alcohol dehydrogenase family.

The catalysed reaction is 3-oxoadipate + NAD(+) = maleylacetate + NADH + H(+). It catalyses the reaction 3-oxoadipate + NADP(+) = maleylacetate + NADPH + H(+). Its pathway is aromatic compound metabolism; 3-chlorocatechol degradation. This Pseudomonas sp. (strain P51) protein is Maleylacetate reductase (tcbF).